Reading from the N-terminus, the 450-residue chain is Tubulin alpha chain (450 aa).

GTP is bound by residues Gln11, Glu71, Ser140, Gly144, Thr145, Thr179, Asn206, and Asn228. A Mg(2+)-binding site is contributed by Glu71. The active site involves Glu254.

This sequence belongs to the tubulin family. In terms of assembly, dimer of alpha and beta chains. A typical microtubule is a hollow water-filled tube with an outer diameter of 25 nm and an inner diameter of 15 nM. Alpha-beta heterodimers associate head-to-tail to form protofilaments running lengthwise along the microtubule wall with the beta-tubulin subunit facing the microtubule plus end conferring a structural polarity. Microtubules usually have 13 protofilaments but different protofilament numbers can be found in some organisms and specialized cells. Mg(2+) serves as cofactor.

The protein resides in the cytoplasm. Its subcellular location is the cytoskeleton. It carries out the reaction GTP + H2O = GDP + phosphate + H(+). In terms of biological role, tubulin is the major constituent of microtubules, a cylinder consisting of laterally associated linear protofilaments composed of alpha- and beta-tubulin heterodimers. Microtubules grow by the addition of GTP-tubulin dimers to the microtubule end, where a stabilizing cap forms. Below the cap, tubulin dimers are in GDP-bound state, owing to GTPase activity of alpha-tubulin. This is Tubulin alpha chain from Zymoseptoria tritici (Speckled leaf blotch fungus).